Reading from the N-terminus, the 384-residue chain is S-adenosylmethionine synthase (384 aa).

His15 provides a ligand contact to ATP. Asp17 serves as a coordination point for Mg(2+). Residue Glu43 coordinates K(+). Residues Glu56 and Gln99 each contribute to the L-methionine site. A flexible loop region spans residues 99 to 109 (QSPDINQGVDR). ATP-binding positions include 164–166 (DAK), 230–231 (RF), Asp239, 245–246 (RK), Ala262, and Lys266. Asp239 is a binding site for L-methionine. Lys270 provides a ligand contact to L-methionine.

It belongs to the AdoMet synthase family. In terms of assembly, homotetramer; dimer of dimers. Mg(2+) serves as cofactor. It depends on K(+) as a cofactor.

It is found in the cytoplasm. The catalysed reaction is L-methionine + ATP + H2O = S-adenosyl-L-methionine + phosphate + diphosphate. Its pathway is amino-acid biosynthesis; S-adenosyl-L-methionine biosynthesis; S-adenosyl-L-methionine from L-methionine: step 1/1. Functionally, catalyzes the formation of S-adenosylmethionine (AdoMet) from methionine and ATP. The overall synthetic reaction is composed of two sequential steps, AdoMet formation and the subsequent tripolyphosphate hydrolysis which occurs prior to release of AdoMet from the enzyme. This Enterobacter sp. (strain 638) protein is S-adenosylmethionine synthase.